Here is a 245-residue protein sequence, read N- to C-terminus: Spore membrane assembly protein 1 (245 aa).

Involved in spore and ascus formation. Required for the efficient assembly of the precursors of the prospore membrane to a continuous prospore membrane. The polypeptide is Spore membrane assembly protein 1 (SMA1) (Saccharomyces cerevisiae (strain ATCC 204508 / S288c) (Baker's yeast)).